Reading from the N-terminus, the 301-residue chain is MENHKDDAVLLKHGWCEMLKGGVIMDVKSVEQAKIAEEAGAIGVMVLENIPSELRNKEGVARSVDPSKVEEIKKCVSINVLAKVRIGHFVEAQILEELKIDMIDESEVLTIADEMHHIDKHKFKTPFVCGCTNLGEALRRISEGASMIRTKGEAGTGNIIEAIKHIRTVNNEIKYLCSLSDSEVYHFAKKINAPIDLVLLTKKLKRLPVVNFAAGGVATPADAAMCMQLGMDGVFVGSGIFESENPRKMAASIVSAVSNFNNPKILLDVSMNLGKAMCGSTRVSDKWKNKNEEHTKFLTPQ.

D26 serves as a coordination point for D-ribose 5-phosphate. K83 (schiff-base intermediate with D-ribose 5-phosphate) is an active-site residue. G155 contacts D-ribose 5-phosphate. Residue R167 participates in D-glyceraldehyde 3-phosphate binding. D-ribose 5-phosphate is bound by residues G216 and 237–238 (GS).

This sequence belongs to the PdxS/SNZ family. In terms of assembly, homohexamer and homododecamer. In the presence of Pdx2, forms a dodecamer of heterodimers.

The protein resides in the cytoplasm. It catalyses the reaction aldehydo-D-ribose 5-phosphate + D-glyceraldehyde 3-phosphate + L-glutamine = pyridoxal 5'-phosphate + L-glutamate + phosphate + 3 H2O + H(+). The protein operates within cofactor biosynthesis; pyridoxal 5'-phosphate biosynthesis. Catalyzes the formation of pyridoxal 5'-phosphate from ribose 5-phosphate (RBP), glyceraldehyde 3-phosphate (G3P) and ammonia. The ammonia is provided by Pdx2. Can also use ribulose 5-phosphate and dihydroxyacetone phosphate as substrates, resulting from enzyme-catalyzed isomerization of RBP and G3P, respectively. The chain is Pyridoxal 5'-phosphate synthase subunit Pdx1 (pdx1) from Plasmodium falciparum (isolate 3D7).